A 301-amino-acid polypeptide reads, in one-letter code: MSNTVEFARMNGLGNKILVVDMRGRKDVVTAAAAIALNADPATEFDQIMAIHDPKAEGTDAWIDILNSDGTKAQACGNGTRCVVQALAAETGKKVFTFQTVAGILNAVEHEDGTISVDMGRPVFDWDKIPLAEEFADTRRIELQIGPIDNPVLHSPSVMSMGNPHAIFWVDKDPMSYDLARFGPLLENHPMFPERANITLAQVLSPTLLRTRTWERGAGLTLACGSAACSAAVSAARTGRTGRKVTIDVASAPASGQLTIEWRENDDHVVMTGPAEWEWSGVVDPVTGSFTRAQEQGAQAR.

The substrate site is built by N15, Q47, and N67. C76 acts as the Proton donor in catalysis. Substrate-binding positions include 77 to 78, N163, N197, and 215 to 216; these read GN and ER. The active-site Proton acceptor is C224. 225–226 lines the substrate pocket; it reads GS.

This sequence belongs to the diaminopimelate epimerase family. As to quaternary structure, homodimer.

It localises to the cytoplasm. It carries out the reaction (2S,6S)-2,6-diaminopimelate = meso-2,6-diaminopimelate. It functions in the pathway amino-acid biosynthesis; L-lysine biosynthesis via DAP pathway; DL-2,6-diaminopimelate from LL-2,6-diaminopimelate: step 1/1. In terms of biological role, catalyzes the stereoinversion of LL-2,6-diaminopimelate (L,L-DAP) to meso-diaminopimelate (meso-DAP), a precursor of L-lysine and an essential component of the bacterial peptidoglycan. The chain is Diaminopimelate epimerase from Rhizobium rhizogenes (strain K84 / ATCC BAA-868) (Agrobacterium radiobacter).